The primary structure comprises 830 residues: Leucine--tRNA ligase (830 aa).

The 'HIGH' region motif lies at 34–44 (PYPSGNIHMGH). Residues 592 to 596 (KMSKS) carry the 'KMSKS' region motif. Residue lysine 595 coordinates ATP.

This sequence belongs to the class-I aminoacyl-tRNA synthetase family.

It localises to the cytoplasm. The enzyme catalyses tRNA(Leu) + L-leucine + ATP = L-leucyl-tRNA(Leu) + AMP + diphosphate. The polypeptide is Leucine--tRNA ligase (Ehrlichia ruminantium (strain Gardel)).